The primary structure comprises 212 residues: Phosphatidylserine decarboxylase proenzyme (212 aa).

S182 acts as the Schiff-base intermediate with substrate; via pyruvic acid in catalysis. S182 carries the pyruvic acid (Ser); by autocatalysis modification.

The protein belongs to the phosphatidylserine decarboxylase family. PSD-A subfamily. In terms of assembly, heterodimer of a large membrane-associated beta subunit and a small pyruvoyl-containing alpha subunit. Pyruvate is required as a cofactor. In terms of processing, is synthesized initially as an inactive proenzyme. Formation of the active enzyme involves a self-maturation process in which the active site pyruvoyl group is generated from an internal serine residue via an autocatalytic post-translational modification. Two non-identical subunits are generated from the proenzyme in this reaction, and the pyruvate is formed at the N-terminus of the alpha chain, which is derived from the carboxyl end of the proenzyme. The post-translation cleavage follows an unusual pathway, termed non-hydrolytic serinolysis, in which the side chain hydroxyl group of the serine supplies its oxygen atom to form the C-terminus of the beta chain, while the remainder of the serine residue undergoes an oxidative deamination to produce ammonia and the pyruvoyl prosthetic group on the alpha chain.

The protein resides in the cell membrane. It catalyses the reaction a 1,2-diacyl-sn-glycero-3-phospho-L-serine + H(+) = a 1,2-diacyl-sn-glycero-3-phosphoethanolamine + CO2. The protein operates within phospholipid metabolism; phosphatidylethanolamine biosynthesis; phosphatidylethanolamine from CDP-diacylglycerol: step 2/2. In terms of biological role, catalyzes the formation of phosphatidylethanolamine (PtdEtn) from phosphatidylserine (PtdSer). The protein is Phosphatidylserine decarboxylase proenzyme of Paraburkholderia xenovorans (strain LB400).